The primary structure comprises 389 residues: 1-acyl-sn-glycerol-3-phosphate acyltransferase 2 (389 aa).

The chain crosses the membrane as a helical span at residues 2-22; sequence VIAAAVIVPLGLLFFISGLAV. An HXXXXD motif motif is present at residues 91–96; it reads HRSDID. The next 2 membrane-spanning stretches (helical) occupy residues 305 to 325 and 333 to 353; these read LAVV…FLHW and KGIT…QILI. The disordered stretch occupies residues 357-389; sequence QSERSTPAKVVPAKPKDNHHPESSSQTETEKEK. A compositionally biased stretch (basic and acidic residues) spans 370 to 389; that stretch reads KPKDNHHPESSSQTETEKEK.

It belongs to the 1-acyl-sn-glycerol-3-phosphate acyltransferase family. Interacts with GPAT9 and DGAT1. In terms of tissue distribution, present in roots, leaves, stems, floral buds and siliques (at protein level). Widely expressed. In contrast to LPAT1, it is not expressed at higher level in leaves.

The protein localises to the endoplasmic reticulum membrane. The catalysed reaction is a 1-acyl-sn-glycero-3-phosphate + an acyl-CoA = a 1,2-diacyl-sn-glycero-3-phosphate + CoA. It functions in the pathway phospholipid metabolism; CDP-diacylglycerol biosynthesis; CDP-diacylglycerol from sn-glycerol 3-phosphate: step 2/3. In terms of biological role, converts lysophosphatidic acid (LPA) into phosphatidic acid by incorporating acyl moiety at the 2 position. Has preference for C-18-CoA substrates compared to C-16-CoA substrates. Required for female but not male gametophyte development. This is 1-acyl-sn-glycerol-3-phosphate acyltransferase 2 (LPAT2) from Arabidopsis thaliana (Mouse-ear cress).